The sequence spans 644 residues: Anti-sigma-I factor RsgI3 (644 aa).

Over 1–56 (MDNIGVIIKIEGNEAIVMTDDCSFKKVPIKDGMHPGQKILVPNNEVIQKENKSIKR) the chain is Cytoplasmic. Residues 3-50 (NIGVIIKIEGNEAIVMTDDCSFKKVPIKDGMHPGQKILVPNNEVIQKE) enclose the RsgI N-terminal anti-sigma domain. A helical membrane pass occupies residues 57–77 (ISAVATGIAAVFLMVLSLIWI). At 78 to 644 (NKPGRPDGIY…VVPSKNLFAD (567 aa)) the chain is on the extracellular side. Residues 302 to 328 (PTNTPSISTKPSATPAENPTPKLTQKP) are compositionally biased toward polar residues. Positions 302–359 (PTNTPSISTKPSATPAENPTPKLTQKPTPVPAKTGERTSTTPTPTPAPTVRNGTGSGL) are disordered. PA14 domains follow at residues 354–491 (GTGS…PSSQ) and 502–640 (KDVN…PSKN).

Interacts (via RsgI N-terminal anti-sigma domain) with SigI3.

The protein resides in the cell membrane. Its function is as follows. Anti-sigma factor for SigI3. Negatively regulates SigI3 activity through direct interaction. Binding of the polysaccharide substrate to the extracellular C-terminal sensing domain of RsgI3 may induce a conformational change in its N-terminal cytoplasmic region, leading to the release and activation of SigI3. In Acetivibrio thermocellus (strain ATCC 27405 / DSM 1237 / JCM 9322 / NBRC 103400 / NCIMB 10682 / NRRL B-4536 / VPI 7372) (Clostridium thermocellum), this protein is Anti-sigma-I factor RsgI3.